Consider the following 149-residue polypeptide: ER export of PMA1 protein 1 (149 aa).

Residues 1–6 are Lumenal-facing; sequence MNLYGY. A helical; Signal-anchor for type II membrane protein transmembrane segment spans residues 7–27; the sequence is FLLLIIVIAFIALLPLFSGIG. At 28 to 149 the chain is on the cytoplasmic side; the sequence is TFKLTKPKSS…KKNEAYEGFV (122 aa).

Interacts with PMA1 and PSG1.

Its subcellular location is the endoplasmic reticulum membrane. It localises to the cytoplasmic vesicle. The protein localises to the COPI-coated vesicle membrane. It is found in the COPII-coated vesicle membrane. The protein resides in the golgi apparatus membrane. Its function is as follows. Specific cargo receptor protein for the plasma membrane ATPase PMA1 that acts with PSG1 to promote the transport and maturation of PMA1. EXP1 and PSG1 probably act sequentially to promote PMA1 sorting between the ER and the Golgi, with EXP1 promoting PMA1 export from the ER to the Golgi while PSG1 has a role in PMA1 maturation or quality control in the Golgi. This is ER export of PMA1 protein 1 from Saccharomyces cerevisiae (strain ATCC 204508 / S288c) (Baker's yeast).